The following is a 359-amino-acid chain: Fructose-bisphosphate aldolase (359 aa).

Ser50 lines the D-glyceraldehyde 3-phosphate pocket. Catalysis depends on Asp83, which acts as the Proton donor. Zn(2+) contacts are provided by His84, Asp105, Glu142, and His198. Gly199 lines the dihydroxyacetone phosphate pocket. Position 232 (His232) interacts with Zn(2+). Residues 233–235 (GSS) and 275–278 (NIDT) each bind dihydroxyacetone phosphate.

The protein belongs to the class II fructose-bisphosphate aldolase family. In terms of assembly, homodimer. It depends on Zn(2+) as a cofactor.

It carries out the reaction beta-D-fructose 1,6-bisphosphate = D-glyceraldehyde 3-phosphate + dihydroxyacetone phosphate. Its pathway is carbohydrate biosynthesis; Calvin cycle. It participates in carbohydrate degradation; glycolysis; D-glyceraldehyde 3-phosphate and glycerone phosphate from D-glucose: step 4/4. In terms of biological role, catalyzes the aldol condensation of dihydroxyacetone phosphate (DHAP or glycerone-phosphate) with glyceraldehyde 3-phosphate (G3P) to form fructose 1,6-bisphosphate (FBP) in gluconeogenesis and the reverse reaction in glycolysis. The chain is Fructose-bisphosphate aldolase (cbbA) from Sinorhizobium medicae (strain WSM419) (Ensifer medicae).